The following is a 659-amino-acid chain: MSSLFPFIFLFLFSFLTSFRASAQDPRFLAYYCPNATTYSSNSTYLTNLKTLLSSLSSRNASYSTGFQNATVGQALDRVTGLFLCRGDVSPEVCRNCVTFAVNNTFSRCPNQREAVFYYEECILRYSHKNILSTAITNEGEFILRNPNHISPIQNQINQFTNLVLSNMNQIAIEAADNPRKFSTIKTELTALQTFYGLVQCTPDLSRQNCMNCLTSSINRMPFSRIGARQFWPSCNSRYELYDFYNETAIGTPPPPLPPLASPSLSDKSGNSNVVVVAVVVPIIVAVLIFIAGYCFFAKRAKKTYGTTPALDEDDKTTIESLQLDYRAIQAATNDFSENNKIGRGGFGDVYKGTFSNGTEVAVKRLSKTSEQGDTEFKNEVVVVANLRHKNLVRILGFSIEREERILVYEYVENKSLDNFLFDPAKKGQLYWTQRYHIIGGIARGILYLHQDSRLTIIHRDLKASNILLDADMNPKIADFGMARIFGMDQTQQNTSRIVGTYGYMSPEYAMRGQFSMKSDVYSFGVLVLEIISGRKNNSFIETDDAQDLVTHAWRLWRNGTALDLVDPFIADSCRKSEVVRCTHIGLLCVQEDPVKRPAMSTISVMLTSNTMALPAPQQPGFFVRSRPGTNRLDSDQSTTNKSVTVSIDDKSMSDLDPR.

The first 23 residues, 1-23, serve as a signal peptide directing secretion; the sequence is MSSLFPFIFLFLFSFLTSFRASA. Over 24 to 273 the chain is Extracellular; sequence QDPRFLAYYC…SLSDKSGNSN (250 aa). 2 Gnk2-homologous domains span residues 27-131 and 142-244; these read RFLA…HKNI and FILR…LYDF. Asn-35, Asn-42, Asn-60, Asn-69, and Asn-103 each carry an N-linked (GlcNAc...) asparagine glycan. A glycan (N-linked (GlcNAc...) asparagine) is linked at Asn-246. A helical membrane pass occupies residues 274–294; it reads VVVVAVVVPIIVAVLIFIAGY. Topologically, residues 295–659 are cytoplasmic; the sequence is CFFAKRAKKT…DKSMSDLDPR (365 aa). One can recognise a Protein kinase domain in the interval 336-622; sequence FSENNKIGRG…ALPAPQQPGF (287 aa). Residues 342–350 and Lys-364 contribute to the ATP site; that span reads IGRGGFGDV. Tyr-409 carries the phosphotyrosine modification. Asp-461 serves as the catalytic Proton acceptor. Ser-465 carries the phosphoserine modification. Phosphothreonine is present on Thr-501. Phosphotyrosine is present on Tyr-509. The disordered stretch occupies residues 626–659; the sequence is SRPGTNRLDSDQSTTNKSVTVSIDDKSMSDLDPR. Residues 636-646 show a composition bias toward polar residues; that stretch reads DQSTTNKSVTV. The span at 648–659 shows a compositional bias: basic and acidic residues; the sequence is IDDKSMSDLDPR.

The protein belongs to the protein kinase superfamily. Ser/Thr protein kinase family. CRK subfamily.

Its subcellular location is the membrane. The enzyme catalyses L-seryl-[protein] + ATP = O-phospho-L-seryl-[protein] + ADP + H(+). It carries out the reaction L-threonyl-[protein] + ATP = O-phospho-L-threonyl-[protein] + ADP + H(+). The sequence is that of Cysteine-rich receptor-like protein kinase 7 (CRK7) from Arabidopsis thaliana (Mouse-ear cress).